The sequence spans 216 residues: Transmembrane protein 186 (216 aa).

The Mitochondrial matrix portion of the chain corresponds to 1–68 (MAFLLRAVPR…IYRFNAIRAL (68 aa)). The helical transmembrane segment at 69–91 (GFLSRLKLAQTAVTVVALPPGFY) threads the bilayer. Over 92 to 103 (CYSQGLMTLSSL) the chain is Mitochondrial intermembrane. The chain crosses the membrane as a helical span at residues 104 to 124 (GLMSGIASFALVMLCWMSHFF). Topologically, residues 125–216 (RRLVGILYVN…GTLATLKNSK (92 aa)) are mitochondrial matrix.

The protein belongs to the TMEM186 family. As to quaternary structure, part of the mitochondrial complex I assembly/MCIA complex that comprises at least the core subunits TMEM126B, NDUFAF1, ECSIT and ACAD9 and complement subunits such as COA1 and TMEM186. Interacts with MT-ND3.

It is found in the mitochondrion inner membrane. Functionally, as part of the MCIA complex, required for efficient assembly of the mitochondrial complex I. In Rattus norvegicus (Rat), this protein is Transmembrane protein 186.